We begin with the raw amino-acid sequence, 189 residues long: Xanthine phosphoribosyltransferase (189 aa).

Xanthine-binding residues include L20 and N27. Position 127 to 131 (127 to 131 (AYGNA)) interacts with 5-phospho-alpha-D-ribose 1-diphosphate. Xanthine is bound at residue K155.

The protein belongs to the purine/pyrimidine phosphoribosyltransferase family. Xpt subfamily. In terms of assembly, homodimer.

The protein resides in the cytoplasm. The enzyme catalyses XMP + diphosphate = xanthine + 5-phospho-alpha-D-ribose 1-diphosphate. The protein operates within purine metabolism; XMP biosynthesis via salvage pathway; XMP from xanthine: step 1/1. Functionally, converts the preformed base xanthine, a product of nucleic acid breakdown, to xanthosine 5'-monophosphate (XMP), so it can be reused for RNA or DNA synthesis. The protein is Xanthine phosphoribosyltransferase of Bacteroides fragilis (strain ATCC 25285 / DSM 2151 / CCUG 4856 / JCM 11019 / LMG 10263 / NCTC 9343 / Onslow / VPI 2553 / EN-2).